The sequence spans 51 residues: Large ribosomal subunit protein eL40 (51 aa).

It belongs to the eukaryotic ribosomal protein eL40 family.

The polypeptide is Large ribosomal subunit protein eL40 (Thermofilum pendens (strain DSM 2475 / Hrk 5)).